The primary structure comprises 88 residues: Small ribosomal subunit protein bS20 (88 aa).

The segment at 1 to 28 (MANTSSAKKATRKIARRTAVNKSRRTQM) is disordered.

In terms of biological role, binds directly to 16S ribosomal RNA. This is Small ribosomal subunit protein bS20 from Rhodopseudomonas palustris (strain ATCC BAA-98 / CGA009).